We begin with the raw amino-acid sequence, 494 residues long: Glutamate--tRNA ligase (494 aa).

A 'HIGH' region motif is present at residues 10-20; the sequence is PSPTGDPHVGT. 4 residues coordinate Zn(2+): C107, C109, C134, and H136. The 'KMSKS' region signature appears at 251–255; the sequence is KLSKR. K254 is a binding site for ATP.

The protein belongs to the class-I aminoacyl-tRNA synthetase family. Glutamate--tRNA ligase type 1 subfamily. Monomer. Zn(2+) serves as cofactor.

It is found in the cytoplasm. The catalysed reaction is tRNA(Glu) + L-glutamate + ATP = L-glutamyl-tRNA(Glu) + AMP + diphosphate. Its function is as follows. Catalyzes the attachment of glutamate to tRNA(Glu) in a two-step reaction: glutamate is first activated by ATP to form Glu-AMP and then transferred to the acceptor end of tRNA(Glu). The polypeptide is Glutamate--tRNA ligase (Pseudomonas aeruginosa (strain ATCC 15692 / DSM 22644 / CIP 104116 / JCM 14847 / LMG 12228 / 1C / PRS 101 / PAO1)).